The following is a 119-amino-acid chain: Protein yippee-like 3 (119 aa).

The Yippee domain maps to 19–116; it reads RRYSCVHCRA…IELSHMIKDN (98 aa). Zn(2+) contacts are provided by Cys-23, Cys-26, Cys-79, and Cys-82.

This sequence belongs to the yippee family.

The protein resides in the nucleus. It localises to the nucleolus. May be involved in proliferation and apoptosis in myeloid precursor cells. This Danio rerio (Zebrafish) protein is Protein yippee-like 3 (ypel3).